The following is a 720-amino-acid chain: Catalase-peroxidase (720 aa).

A cross-link (tryptophyl-tyrosyl-methioninium (Trp-Tyr) (with M-233)) is located at residues 82 to 207; the sequence is WHSAGTYRTF…LGNTVMGLIY (126 aa). The active-site Proton acceptor is His-83. Residues 207–233 constitute a cross-link (tryptophyl-tyrosyl-methioninium (Tyr-Met) (with W-82)); that stretch reads YVNPEGPNGEPDLEGSAKNIRESFGKM. His-248 contacts heme b.

The protein belongs to the peroxidase family. Peroxidase/catalase subfamily. As to quaternary structure, homodimer or homotetramer. Requires heme b as cofactor. Formation of the three residue Trp-Tyr-Met cross-link is important for the catalase, but not the peroxidase activity of the enzyme.

The catalysed reaction is H2O2 + AH2 = A + 2 H2O. The enzyme catalyses 2 H2O2 = O2 + 2 H2O. Bifunctional enzyme with both catalase and broad-spectrum peroxidase activity. This Halobacterium salinarum (strain ATCC 29341 / DSM 671 / R1) protein is Catalase-peroxidase.